The sequence spans 318 residues: Beta-ketoacyl-[acyl-carrier-protein] synthase III (318 aa).

Active-site residues include Cys113 and His245. The tract at residues 246 to 250 is ACP-binding; sequence QANIR. Asn275 is an active-site residue.

The protein belongs to the thiolase-like superfamily. FabH family. As to quaternary structure, homodimer.

It is found in the cytoplasm. It carries out the reaction malonyl-[ACP] + acetyl-CoA + H(+) = 3-oxobutanoyl-[ACP] + CO2 + CoA. Its pathway is lipid metabolism; fatty acid biosynthesis. In terms of biological role, catalyzes the condensation reaction of fatty acid synthesis by the addition to an acyl acceptor of two carbons from malonyl-ACP. Catalyzes the first condensation reaction which initiates fatty acid synthesis and may therefore play a role in governing the total rate of fatty acid production. Possesses both acetoacetyl-ACP synthase and acetyl transacylase activities. Its substrate specificity determines the biosynthesis of branched-chain and/or straight-chain of fatty acids. The chain is Beta-ketoacyl-[acyl-carrier-protein] synthase III from Wolbachia pipientis subsp. Culex pipiens (strain wPip).